The primary structure comprises 362 residues: Bifunctional nitrilase/nitrile hydratase NIT4 (362 aa).

One can recognise a CN hydrolase domain in the interval 31 to 307 (VRATVVQAST…EALITADLDL (277 aa)). Residue Glu71 is the Proton acceptor of the active site. Lys162 (proton donor) is an active-site residue. The active-site Nucleophile is Cys196.

The protein belongs to the carbon-nitrogen hydrolase superfamily. Nitrilase family.

It catalyses the reaction a nitrile + 2 H2O = a carboxylate + NH4(+). The enzyme catalyses 3-cyano-L-alanine + 2 H2O = L-aspartate + NH4(+). Its function is as follows. Highly specific for beta-cyano-L-alanine (Ala(CN)). Low activity with 3-phenylpropionitrile (PPN). Not associated with auxin production but may be involved in cyanide detoxification. The polypeptide is Bifunctional nitrilase/nitrile hydratase NIT4 (NIT4) (Oryza sativa subsp. japonica (Rice)).